The chain runs to 163 residues: Carbon monoxide dehydrogenase small chain (163 aa).

The 2Fe-2S ferredoxin-type domain occupies 4–80 (KIITVNVNGK…GSEVLTVEGL (77 aa)). The [2Fe-2S] cluster site is built by cysteine 42, cysteine 47, cysteine 50, cysteine 62, cysteine 101, cysteine 104, cysteine 136, and cysteine 138.

Dimer of heterotrimers. Each heterotrimer consists of a large, a medium and a small subunit. It depends on [2Fe-2S] cluster as a cofactor.

The catalysed reaction is CO + a quinone + H2O = a quinol + CO2. Its function is as follows. Catalyzes the oxidation of carbon monoxide to carbon dioxide. This is Carbon monoxide dehydrogenase small chain (cutS) from Hydrogenophaga pseudoflava (Pseudomonas carboxydoflava).